Reading from the N-terminus, the 159-residue chain is Transcriptional repressor NrdR (159 aa).

A compositionally biased stretch (polar residues) spans 1-11 (MQCPTCQNTDS). A disordered region spans residues 1 to 21 (MQCPTCQNTDSRVLESRSADS). The segment at 3-34 (CPTCQNTDSRVLESRSADSGKSVRRRRECLNC) is a zinc-finger region. The ATP-cone domain occupies 49–139 (VSVLKKDGGR…VYRKFNGVKD (91 aa)).

It belongs to the NrdR family. Zn(2+) is required as a cofactor.

Its function is as follows. Negatively regulates transcription of bacterial ribonucleotide reductase nrd genes and operons by binding to NrdR-boxes. This is Transcriptional repressor NrdR from Prochlorococcus marinus (strain AS9601).